Reading from the N-terminus, the 484-residue chain is Glutamyl-tRNA(Gln) amidotransferase subunit A (484 aa).

Residues Lys76 and Ser151 each act as charge relay system in the active site. The Acyl-ester intermediate role is filled by Ser175.

This sequence belongs to the amidase family. GatA subfamily. As to quaternary structure, heterotrimer of A, B and C subunits.

It catalyses the reaction L-glutamyl-tRNA(Gln) + L-glutamine + ATP + H2O = L-glutaminyl-tRNA(Gln) + L-glutamate + ADP + phosphate + H(+). Allows the formation of correctly charged Gln-tRNA(Gln) through the transamidation of misacylated Glu-tRNA(Gln) in organisms which lack glutaminyl-tRNA synthetase. The reaction takes place in the presence of glutamine and ATP through an activated gamma-phospho-Glu-tRNA(Gln). This is Glutamyl-tRNA(Gln) amidotransferase subunit A from Saccharophagus degradans (strain 2-40 / ATCC 43961 / DSM 17024).